Here is a 131-residue protein sequence, read N- to C-terminus: Small ribosomal subunit protein uS8 (131 aa).

Belongs to the universal ribosomal protein uS8 family. In terms of assembly, part of the 30S ribosomal subunit. Contacts proteins S5 and S12.

Its function is as follows. One of the primary rRNA binding proteins, it binds directly to 16S rRNA central domain where it helps coordinate assembly of the platform of the 30S subunit. The polypeptide is Small ribosomal subunit protein uS8 (Helicobacter acinonychis (strain Sheeba)).